A 494-amino-acid chain; its full sequence is Zinc finger and SCAN domain-containing protein 30 (494 aa).

The SCAN box domain occupies 48–130 (RQKFRQFSYS…TMLEELEKEL (83 aa)). Lys197 participates in a covalent cross-link: Glycyl lysine isopeptide (Lys-Gly) (interchain with G-Cter in SUMO2). 7 consecutive C2H2-type zinc fingers follow at residues 301-323 (YECF…QRIH), 329-351 (YACK…QRIH), 357-379 (YECC…RRIH), 385-407 (YECG…KKIH), 413-435 (YECI…QRIH), 441-463 (YECN…QRIH), and 469-491 (YECS…QRTH).

The protein belongs to the krueppel C2H2-type zinc-finger protein family.

It localises to the nucleus. May be involved in transcriptional regulation. The polypeptide is Zinc finger and SCAN domain-containing protein 30 (ZSCAN30) (Homo sapiens (Human)).